Reading from the N-terminus, the 355-residue chain is Transcription factor TGAL9 (355 aa).

Disordered stretches follow at residues 83–104 and 118–188; these read FPSQ…MAAI and GSSK…DAKT. Low complexity predominate over residues 118 to 134; the sequence is GSSKRPPAAAAAGGQPS. Residues 135 to 144 are compositionally biased toward polar residues; the sequence is RLNNPADQPS. Basic and acidic residues-rich tracts occupy residues 148 to 159 and 176 to 188; these read KDGKAAVVKKEG and SEHE…DAKT. A bZIP domain is found at 185 to 230; that stretch reads DAKTLRRLAQNREAARKSRLRKKAYIQNLETSRIRLSQLEQELVQR. The segment at 187 to 207 is basic motif; that stretch reads KTLRRLAQNREAARKSRLRKK. The leucine-zipper stretch occupies residues 213–227; it reads LETSRIRLSQLEQEL. Positions 254-355 constitute a DOG1 domain; sequence AAWFDGEYAR…RPSELIKVST (102 aa).

The protein belongs to the bZIP family. In terms of assembly, interacts with NPR5/NH4, NH5.1 and NH5.2.

It is found in the nucleus. Its function is as follows. Transcriptional regulator involved in defense response. This chain is Transcription factor TGAL9, found in Oryza sativa subsp. japonica (Rice).